The sequence spans 1834 residues: Non-reducing polyketide synthase spyA (1834 aa).

The 165-residue stretch at 91–255 (LAPLTVIIHL…TRIPIYGRYH (165 aa)) folds into the Starter acyltransferase (SAT) domain. Residues 385–801 (EHSIAVIGAA…GNNTAVIVCE (417 aa)) enclose the Ketosynthase family 3 (KS3) domain. Catalysis depends on for beta-ketoacyl synthase activity residues Cys-551, His-687, and His-724. The Malonyl-CoA:ACP transacylase (MAT) domain occupies 919-1164 (YEGSSLLRSH…KELGPCTWVE (246 aa)). The tract at residues 1269 to 1398 (PLVYLLRDEG…GVISLRQERH (130 aa)) is N-terminal hotdog fold. The PKS/mFAS DH domain occupies 1269 to 1577 (PLVYLLRDEG…FVRITASSLN (309 aa)). Residues 1269-1577 (PLVYLLRDEG…FVRITASSLN (309 aa)) form a product template (PT) domain region. Positions 1428–1577 (AISLKEGIIY…FVRITASSLN (150 aa)) are C-terminal hotdog fold. The region spanning 1616 to 1690 (SDILSILSHL…TLCQEIQTQR (75 aa)) is the Carrier 1 domain. Position 1650 is an O-(pantetheine 4'-phosphoryl)serine (Ser-1650). Residues 1693–1720 (RLARASRTTTATRNTSFSLGRRTSSTES) are disordered. A compositionally biased stretch (low complexity) spans 1697 to 1710 (ASRTTTATRNTSFS). A Carrier 2 domain is found at 1731-1807 (SKSAAVLAQL…GLARLILASE (77 aa)). Ser-1767 carries the O-(pantetheine 4'-phosphoryl)serine modification.

Pantetheine 4'-phosphate serves as cofactor.

It catalyses the reaction 2 malonyl-CoA + acetyl-CoA + 2 H(+) = triacetate lactone + 2 CO2 + 3 CoA. It participates in secondary metabolite biosynthesis; terpenoid biosynthesis. In terms of biological role, non-reducing polyketide synthase; part of the gene cluster that mediates the biosynthesis of meroterpenoids called sartorypyrones. The biosynthesis of sartorypyrones begins with the production of triacetic acid lactone (TAL) by the NR-PKS spyA using one molecule of acetyl-CoA and two molecules of malonyl-CoA. As spyA lacks a thioesterase (TE) domain, TAL is likely generated through self-release from spyA by spontaneous lactonization. After production of TAL, the prenyltransferase spyF then conjugates geranylgeranyl pyrophosphate (GGPP) to TAL to form geranylgeranyl-triacetate lactone, for which the pathway-specific geranylgeranyl pyrophosphate synthase (GGPS) spyE is required to provide GGPP. Subsequently, geranylgeranyl-triacetate lactone is epoxidized at the terminal olein by the FAD-dependent monooxygenase spyC, followed by cyclization of the terpenoid component catalyzed by the terpene cyclase spyD to produce both the bicyclic sartorypyrone F and the monocyclic sartorypyrone D. Finally, the last step of the biosynthesis involves the acetylation of the meroterpenoids sartorypyrones D and F by the acetyltransferase SpyB to produce sartorypyrones A and G, respectively. This chain is Non-reducing polyketide synthase spyA, found in Aspergillus fumigatus (strain ATCC MYA-4609 / CBS 101355 / FGSC A1100 / Af293) (Neosartorya fumigata).